Here is a 432-residue protein sequence, read N- to C-terminus: G-protein coupled receptor 22 (432 aa).

Residues 1 to 45 (MCFSPVLEINMQSESNVTVRDDIEDIDTNMYQPLSYPLSFQVSLT) are Cytoplasmic-facing. The helical transmembrane segment at 46 to 66 (GFLMLEIVLGLGSNLTVLVLY) threads the bilayer. Topologically, residues 67 to 85 (CMKSNLISSVSNIITMNLH) are extracellular. Residues 86–106 (VLDVIICVGCIPLTIVILLLS) traverse the membrane as a helical segment. Residues 107 to 115 (LERNTALIC) are Cytoplasmic-facing. Residues 116–136 (CFHEACVSFASVSTAINVFAI) form a helical membrane-spanning segment. At 137 to 156 (TLDRYDISVKPANRILTMGR) the chain is on the extracellular side. The chain crosses the membrane as a helical span at residues 157–177 (AVMLMTSIWIFSFFSFLIPFI). Over 178 to 208 (EVNFFSLQSGNAWENKTLLCVSTSEYYTELG) the chain is Cytoplasmic. The helical transmembrane segment at 209–229 (MYYHLLVQIPIFFFTVIVMLI) threads the bilayer. Topologically, residues 230-314 (TYTKILQALN…ERQKRVFKMS (85 aa)) are extracellular. The chain crosses the membrane as a helical span at residues 315–335 (LLIISTFLLCWTPISVLNTTI). Residues 336 to 348 (LCLGPSDLLVKLR) lie on the Cytoplasmic side of the membrane. Residues 349–369 (LCFLVMAYGTTIFHPLLYAFT) form a helical membrane-spanning segment. The Extracellular segment spans residues 370-432 (RQKFQKVLKS…KCLVPQVVTD (63 aa)).

It belongs to the G-protein coupled receptor 1 family. In terms of tissue distribution, abundant levels detected in the brain. High expression in the heart (at protein level). No detectable expression in other peripheral tissues.

It is found in the cell membrane. In terms of biological role, orphan G-protein coupled receptor. Seems to act through a G(i)/G(o) mediated pathway. May be involved in ciliogenesis. The chain is G-protein coupled receptor 22 from Rattus norvegicus (Rat).